The chain runs to 408 residues: Peptidase T (408 aa).

His78 provides a ligand contact to Zn(2+). Asp80 is a catalytic residue. Residue Asp140 participates in Zn(2+) binding. Catalysis depends on Glu173, which acts as the Proton acceptor. Residues Glu174, Asp196, and His379 each coordinate Zn(2+).

It belongs to the peptidase M20B family. Zn(2+) is required as a cofactor.

It localises to the cytoplasm. It carries out the reaction Release of the N-terminal residue from a tripeptide.. Its function is as follows. Cleaves the N-terminal amino acid of tripeptides. The chain is Peptidase T from Escherichia coli (strain K12 / MC4100 / BW2952).